Reading from the N-terminus, the 1227-residue chain is MSSSPSPFGQNEWLVEEMYRKFRDDPSSVDPSWHEFLVDYSPEPTTDSASNGRTTTAAPVTPPTPAPAPAPEPKAAPKPAAKTEAKPAKPAKSATPAKGDESQILRGAAAAVVKNMNASLEVPTATSVRAIPAKLMIDNRVVINNHLKRTRGGKISFTHLLGYAIVQAVKKFPNMNRHFAVVDGKPTAITPAHTNLGLAIDLQGKDGNRSLVVAAIKRCETMRFGQFIAAYEDIVRRARDGKLTAEDFSGVTISLTNPGTLGTVHSVPRLMQGQGAIIGAGAMEYPAEFQGASEERIADLGIGKLITLTSTYDHRIIQGAESGDFLRTIHQLLLDDDFFDEIFRELGIPYEPVRWRTDNPDSIEDKNARVIELIAAYRNRGHLMADIDPLRLDNTRFRSHPDLDVNSHGLTLWDLDREFKVDGFAGVQRKKLRDILSVLRDAYCRHVGVEYTHILEPEQQRWIQERVETKHDKPTVAEQKYILSKLNAAEAFETFLQTKYVGQKRFSLEGAETVIPMMDAVIDQCAEHGLDEVVIAMPHRGRLNVLANIVGKPYSQIFSEFEGNLNPSQAHGSGDVKYHLGATGTYIQMFGDNDIEVSLTANPSHLEAVDPVLEGLVRAKQDLLDTGEEGSDNRFSVVPLMLHGDAAFAGQGVVAETLNLALLRGYRTGGTIHIVVNNQIGFTTAPTDSRSSEYCTDVAKMIGAPIFHVNGDDPEACAWVARLAVDFRQAFKKDVVIDMLCYRRRGHNEGDDPSMTQPYMYDVIDTKRGSRKAYTEALIGRGDISMKEAEDALRDYQGQLERVFNEVRELEKHEIEPSESVEADQQIPSKLATAVDKAMLQRIGDAHLALPEGFTVHPRVRPVLEKRREMAYEGRIDWAFAELLALGSLIAEGKLVRLSGQDTQRGTFTQRHAVIVDRKTGEEFTPLQLLATNPDGTPTGGKFLVYNSALSEFAAVGFEYGYSVGNPDAMVLWEAQFGDFVNGAQSIIDEFISSGEAKWGQLSDVVLLLPHGHEGQGPDHTSGRIERFLQLWAEGSMTIAMPSTPANYFHLLRRHGKDGIQRPLIVFTPKSMLRNKAAVSDIRDFTESKFRSVLEEPMYTDGEGDRNKVTRLLLTSGKIYYELAARKAKENREDVAIVRIEQLAPLPRRRLAETLDRYPNVKEKFWVQEEPANQGAWPSFGLTLPEILPDHFTGLKRISRRAMSAPSSGSSKVHAVEQQEILDTAFG.

The interval Met-1 to Ser-41 is 2-oxoglutarate dehydrogenase E1, N-terminal part. Residues Arg-23–Leu-37 are compositionally biased toward basic and acidic residues. Residues Arg-23–Ser-102 are disordered. The segment at Pro-42–Ala-88 is linker. Residues Glu-43–Arg-53 are compositionally biased toward polar residues. A compositionally biased stretch (pro residues) spans Val-60–Ala-76. Over residues Ala-88–Ala-97 the composition is skewed to low complexity. Residues Lys-89–Asp-335 form a succinyltransferase E2 region. His-314 (proton acceptor; for succinyltransferase activity) is an active-site residue. The 2-oxoglutarate dehydrogenase E1, C-terminal part stretch occupies residues Asp-336 to Gly-1227. Arg-540 contacts thiamine diphosphate. 2-oxoglutarate is bound by residues His-579 and Ser-604. Residues Ser-604, Leu-606, Asp-645, Ala-646, Ala-647, and Asn-678 each coordinate thiamine diphosphate. Position 645 (Asp-645) interacts with Mg(2+). Mg(2+)-binding residues include Asn-678 and Ile-680. The stretch at Asp-783–Glu-814 forms a coiled coil. His-1020 lines the 2-oxoglutarate pocket. Acetyl-CoA-binding residues include Thr-1038, Arg-1054, Lys-1089, Ser-1092, Gln-1142, Arg-1149, and Arg-1150.

It belongs to the 2-oxoacid dehydrogenase family. Kgd subfamily. Homodimer. Interacts with the FHA domain of unphosphorylated GarA. The 2-oxoglutarate dehydrogenase (ODH) complex contains multiple copies of three enzymatic components: 2-oxoglutarate dehydrogenase (E1), dihydrolipoamide succinyltransferase (E2) and lipoamide dehydrogenase (E3). It depends on Mg(2+) as a cofactor. Thiamine diphosphate serves as cofactor.

It catalyses the reaction glyoxylate + 2-oxoglutarate + H(+) = 2-hydroxy-3-oxoadipate + CO2. The catalysed reaction is 2-oxoglutarate + H(+) = succinate semialdehyde + CO2. It carries out the reaction N(6)-[(R)-lipoyl]-L-lysyl-[protein] + 2-oxoglutarate + H(+) = N(6)-[(R)-S(8)-succinyldihydrolipoyl]-L-lysyl-[protein] + CO2. The enzyme catalyses N(6)-[(R)-dihydrolipoyl]-L-lysyl-[protein] + succinyl-CoA = N(6)-[(R)-S(8)-succinyldihydrolipoyl]-L-lysyl-[protein] + CoA. Its pathway is carbohydrate metabolism; tricarboxylic acid cycle; succinate from 2-oxoglutarate (transferase route): step 1/2. It participates in carbohydrate metabolism; tricarboxylic acid cycle; succinyl-CoA from 2-oxoglutarate (dehydrogenase route): step 1/1. Alpha-ketoglutarate dehydrogenase and decarboxylase activities are inhibited by unphosphorylated GarA, and allosterically activated by acetyl-CoA, the main substrate of the TCA cycle. Both the phosphoadenosine and acetyl moieties of acetyl-CoA are important for activation because neither CoA nor the synthetic compound S-(2-acetamidoethyl)-ethanethioate (which mimics the terminal acetyl-phosphopantetheine group of acetyl-CoA) has an activation effect. Functionally, shows three enzymatic activities that share a first common step, the attack of thiamine-PP on 2-oxoglutarate (alpha-ketoglutarate, KG), leading to the formation of an enamine-thiamine-PP intermediate upon decarboxylation. Thus, displays KGD activity, catalyzing the decarboxylation from five-carbon 2-oxoglutarate to four-carbon succinate semialdehyde (SSA). Also catalyzes C-C bond formation between the activated aldehyde formed after decarboxylation of alpha-ketoglutarate and the carbonyl of glyoxylate (GLX), to yield 2-hydroxy-3-oxoadipate (HOA), which spontaneously decarboxylates to form 5-hydroxylevulinate (HLA). And is also a component of the 2-oxoglutarate dehydrogenase (ODH) complex, that catalyzes the overall conversion of 2-oxoglutarate to succinyl-CoA and CO(2). The KG decarboxylase and KG dehydrogenase reactions provide two alternative, tightly regulated, pathways connecting the oxidative and reductive branches of the TCA cycle. This Mycolicibacterium smegmatis (strain ATCC 700084 / mc(2)155) (Mycobacterium smegmatis) protein is Multifunctional 2-oxoglutarate metabolism enzyme (kgd).